The sequence spans 109 residues: Thiosulfate sulfurtransferase GlpE (109 aa).

One can recognise a Rhodanese domain in the interval lysine 17–threonine 105. The Cysteine persulfide intermediate role is filled by cysteine 65.

Belongs to the GlpE family.

It localises to the cytoplasm. The enzyme catalyses thiosulfate + hydrogen cyanide = thiocyanate + sulfite + 2 H(+). It catalyses the reaction thiosulfate + [thioredoxin]-dithiol = [thioredoxin]-disulfide + hydrogen sulfide + sulfite + 2 H(+). Transferase that catalyzes the transfer of sulfur from thiosulfate to thiophilic acceptors such as cyanide or dithiols. May function in a CysM-independent thiosulfate assimilation pathway by catalyzing the conversion of thiosulfate to sulfite, which can then be used for L-cysteine biosynthesis. This chain is Thiosulfate sulfurtransferase GlpE, found in Yersinia pestis.